Consider the following 96-residue polypeptide: UPF0235 protein VV2877 (96 aa).

Belongs to the UPF0235 family.

The protein is UPF0235 protein VV2877 of Vibrio vulnificus (strain YJ016).